The chain runs to 180 residues: Inner membrane-spanning protein YciB (180 aa).

5 helical membrane-spanning segments follow: residues 10-30 (IIAFFVFYKLADIYVATGVLM), 47-67 (ITTRHWVILAVVMLFGAVTLL), 74-94 (IKMKVSVVYVAIALMLLGGLI), 121-141 (YAWIIFCLALAAVNLYIAEFW), and 151-171 (VFGILGISLVFTIGTGFYMYH).

It belongs to the YciB family.

It localises to the cell inner membrane. Functionally, plays a role in cell envelope biogenesis, maintenance of cell envelope integrity and membrane homeostasis. The sequence is that of Inner membrane-spanning protein YciB from Idiomarina loihiensis (strain ATCC BAA-735 / DSM 15497 / L2-TR).